A 117-amino-acid polypeptide reads, in one-letter code: MNLLDNVDAASLRTDVPDFRAGDTLNVHVKVVEGNRSRVQVFKGIVIRRTGGGIREAFTVRKVSFGVGVERTFPLHTPIIDKIEVVTRGDVKRAKLYYLRDLRGKAAKIKERREPRG.

This sequence belongs to the bacterial ribosomal protein bL19 family.

In terms of biological role, this protein is located at the 30S-50S ribosomal subunit interface and may play a role in the structure and function of the aminoacyl-tRNA binding site. The chain is Large ribosomal subunit protein bL19 from Kineococcus radiotolerans (strain ATCC BAA-149 / DSM 14245 / SRS30216).